Consider the following 484-residue polypeptide: Sodium/pantothenate symporter (484 aa).

Transmembrane regions (helical) follow at residues 3 to 23 (LGII…AIFA), 45 to 65 (GFVL…FVGG), 74 to 94 (LGWV…LGAL), 124 to 144 (VWLS…VQFI), 162 to 182 (LLLF…RAVV), 190 to 210 (TVMI…LGGV), 238 to 258 (FMAS…HTAV), 273 to 293 (MLIG…AGAL), 307 to 327 (VIPT…FLAA), 366 to 386 (VSYF…FAAL), 397 to 417 (LFAF…GIYW), 424 to 444 (GALS…QLGI), and 446 to 466 (LFNF…FLVG).

Belongs to the sodium:solute symporter (SSF) (TC 2.A.21) family.

The protein localises to the cell inner membrane. It catalyses the reaction (R)-pantothenate(in) + Na(+)(in) = (R)-pantothenate(out) + Na(+)(out). Functionally, catalyzes the sodium-dependent uptake of extracellular pantothenate. In Haemophilus influenzae (strain ATCC 51907 / DSM 11121 / KW20 / Rd), this protein is Sodium/pantothenate symporter (panF).